The following is a 491-amino-acid chain: Nicotinamide phosphoribosyltransferase (491 aa).

M1 is modified (N-acetylmethionine). Y188 is modified (phosphotyrosine). R196 is a diphosphate binding site. A beta-nicotinamide D-ribonucleotide-binding site is contributed by D219. Positions 247 and 311 each coordinate diphosphate. Residues 311–313 (RPD), 353–354 (GD), G384, and R392 each bind beta-nicotinamide D-ribonucleotide. S472 is modified (phosphoserine).

It belongs to the NAPRTase family. As to quaternary structure, homodimer. As to expression, ubiquitously expressed in lymphoid and non-lymphoid tissues.

The protein resides in the nucleus. The protein localises to the cytoplasm. It is found in the secreted. It carries out the reaction beta-nicotinamide D-ribonucleotide + diphosphate = 5-phospho-alpha-D-ribose 1-diphosphate + nicotinamide + H(+). It participates in cofactor biosynthesis; NAD(+) biosynthesis; nicotinamide D-ribonucleotide from 5-phospho-alpha-D-ribose 1-diphosphate and nicotinamide: step 1/1. In terms of biological role, the secreted form behaves both as a cytokine with immunomodulating properties and an adipokine with anti-diabetic properties, it has no enzymatic activity, partly because of lack of activation by ATP, which has a low level in extracellular space and plasma. Catalyzes the condensation of nicotinamide with 5-phosphoribosyl-1-pyrophosphate to yield nicotinamide mononucleotide, an intermediate in the biosynthesis of NAD. It is the rate limiting component in the mammalian NAD biosynthesis pathway. Plays a role in the modulation of circadian clock function. NAMPT-dependent oscillatory production of NAD regulates oscillation of clock target gene expression by releasing the core clock component: CLOCK-BMAL1 heterodimer from NAD-dependent SIRT1-mediated suppression. The sequence is that of Nicotinamide phosphoribosyltransferase (Nampt) from Mus musculus (Mouse).